The following is a 469-amino-acid chain: MEPAQQPPPQPAPQGPAPPSVSPAGTPAAPPAPPAGHQVVHVRGDSETDLEALFNAVMNPKTANVPQTVPMRLRKLPDSFFKPPEPKSHSRQASTDAGTAGALTPQHVRAHSSPASLQLGAGTLTASGVVSGPAATPAAQHLRQSSFEIPDDVPLPAGWEMAKTSSGQRYFLNHNDQTTTWQDPRKAMLSQLNVPTSASPAVPQTLMNSASGPLPDGWEQAMTQDGEVYYINHKNKTTSWLDPRLDPRFAMNQRITQSAPVKQPPPLAPQSPQGGVLGGGSSNQQQQIQLQQLQMEKERLRLKQQELFRQELALRSQLPSLEQDGGTQNAVSSPGMTQELRTMTTNSSDPFLNSGTYHSRDESTDSGLSMSSYSIPRTPDDFLNSVDEMDTGDTISQSTLPSQQSRFPDYLEALPGTNVDLGTLEGDAMNIEGEELMPSLQEALSSEILDVESVLAATKLDKESFLTWL.

The segment covering 1 to 21 has biased composition (pro residues); sequence MEPAQQPPPQPAPQGPAPPSV. The segment at 1–47 is disordered; the sequence is MEPAQQPPPQPAPQGPAPPSVSPAGTPAAPPAPPAGHQVVHVRGDSE. Position 46 is a phosphoserine (Ser46). Thr48 carries the post-translational modification Phosphothreonine. Residues 71–85 are a coiled coil; sequence MRLRKLPDSFFKPPE. An N6-lactoyllysine modification is found at Lys75. The disordered stretch occupies residues 76–99; sequence LPDSFFKPPEPKSHSRQASTDAGT. A phosphoserine mark is found at Ser90 and Ser94. A phosphothreonine mark is found at Thr95 and Thr104. Residue Ser112 is modified to Phosphoserine; by LATS1 and LATS2. 2 positions are modified to phosphoserine: Ser113 and Ser116. Thr136 carries the post-translational modification Phosphothreonine; by MAPK8 and MAPK9. A Phosphoserine; by LATS1 and LATS2 modification is found at Ser146. WW domains follow at residues 153–186 and 212–245; these read VPLPAGWEMAKTSSGQRYFLNHNDQTTTWQDPRK and GPLPDGWEQAMTQDGEVYYINHKNKTTSWLDPRL. The disordered stretch occupies residues 258–290; sequence SAPVKQPPPLAPQSPQGGVLGGGSSNQQQQIQL. Ser271 and Ser320 each carry phosphoserine. Residues 273 to 469 are transactivation domain; sequence QGGVLGGGSS…LDKESFLTWL (197 aa). The stretch at 280–325 forms a coiled coil; that stretch reads GSSNQQQQIQLQQLQMEKERLRLKQQELFRQELALRSQLPSLEQDG. A Phosphoserine; by MAPK8 and MAPK9 modification is found at Ser333. Residues 345–357 are compositionally biased toward polar residues; sequence TNSSDPFLNSGTY. Residues 345–405 are disordered; the sequence is TNSSDPFLNS…SQSTLPSQQS (61 aa). 3 positions are modified to phosphoserine: Ser347, Ser348, and Ser354. Phosphoserine; by LATS1 and LATS2 is present on Ser363. Over residues 365–375 the composition is skewed to polar residues; sequence DSGLSMSSYSI. A phosphoserine; by CK1 mark is found at Ser366 and Ser369. The residue at position 373 (Tyr373) is a Phosphotyrosine; by ABL1. Thr378 bears the Phosphothreonine; by MAPK8 and MAPK9 mark. The span at 393-405 shows a compositional bias: polar residues; the sequence is DTISQSTLPSQQS.

It belongs to the YAP1 family. As to quaternary structure, part of a complex when phosphorylated that contains DSG3, PKP1, YAP1 and YWHAG; the complex is required for localization of DSG3 and YAP1 to the cell membrane in keratinocytes. Binds to the SH3 domain of the YES kinase. Binds to WBP1 and WBP2. Binds, in vitro, through the WW1 domain, to neural isoforms of ENAH that contain the PPSY motif. The phosphorylated form interacts with YWHAB. Interacts (via WW domains) with LATS1 (via PPxY motif 2). Interacts with LATS2. Interacts (via WW domain 1) with ERBB4 (via PPxY motif 2). Interacts with TEAD1, TEAD2, TEAD3 and TEAD4. Interacts with TP73. Interacts with RUNX1. Interacts with HCK. Interacts (via WW domains) with PTPN14 (via PPxY motif 2); this interaction leads to the cytoplasmic sequestration of YAP1 and inhibits its transcriptional coactivator activity. Interacts (when phosphorylated at Ser-112) with SMAD2, SMAD3 and WWTR1. Interacts with PRRG2 (via cytoplasmic domain). Interacts (via WW domains) with PRRG4 (via cytoplasmic domain). Interacts (phosphorylated) with CLDN18; the interaction sequesters YAP1 away from the nucleus and thereby restricts transcription of YAP1 target genes. Interacts with SMAD1. Interacts with AMOT; the interaction facilitates translocation of YAP1 to the cytoplasm and tight junctions. Interacts with AMOTL2, the interaction is required for ubiquitination of AMOTL2 and localization of YAP1 to tight junctions. Phosphorylated by LATS1 and LATS2; leading to cytoplasmic translocation and inactivation. Phosphorylated by ABL1; leading to YAP1 stabilization, enhanced interaction with TP73 and recruitment onto proapoptotic genes; in response to DNA damage. Phosphorylation at Ser-366 and Ser-369 by CK1 is triggered by previous phosphorylation at Ser-363 by LATS proteins and leads to YAP1 ubiquitination by SCF(beta-TRCP) E3 ubiquitin ligase and subsequent degradation. Phosphorylated at Thr-104, Thr-136, Ser-333 and Thr-378 by MAPK8/JNK1 and MAPK9/JNK2, which is required for the regulation of apoptosis by YAP1. Post-translationally, lactylation by AARS1 promotes nuclear localization and stabilization of YAP1, leading to increased Hippo signaling pathway. Delactylated by SIRT1. In terms of processing, ubiquitinated by SCF(beta-TRCP) E3 ubiquitin ligase. Highly specific to cortical neurons.

It localises to the cytoplasm. It is found in the nucleus. The protein resides in the cell junction. Its subcellular location is the tight junction. The protein localises to the cell membrane. Functionally, transcriptional regulator with dual roles as a coactivator and corepressor. Critical downstream regulatory target in the Hippo signaling pathway, crucial for organ size control and tumor suppression by restricting proliferation and promoting apoptosis. The Hippo signaling pathway core involves a kinase cascade featuring STK3/MST2 and STK4/MST1, along with its regulatory partner SAV1, which phosphorylates and activates LATS1/2 in complex with their regulatory protein, MOB1. This activation leads to the phosphorylation and inactivation of the YAP1 oncoprotein and WWTR1/TAZ. Phosphorylation of YAP1 by LATS1/2 prevents its nuclear translocation, thereby regulating the expression of its target genes. The transcriptional regulation of gene expression requires TEAD transcription factors and modulates cell growth, anchorage-independent growth, and induction of epithelial-mesenchymal transition (EMT). Plays a key role in tissue tension and 3D tissue shape by regulating the cortical actomyosin network, acting via ARHGAP18, a Rho GTPase activating protein that suppresses F-actin polymerization. It also suppresses ciliogenesis by acting as a transcriptional corepressor of TEAD4 target genes AURKA and PLK1. In conjunction with WWTR1, regulates TGFB1-dependent SMAD2 and SMAD3 nuclear accumulation. Synergizes with WBP2 to enhance PGR activity. Attenuates p73-mediated cell death signaling in transcriptional repression-induced atypical death (TRIAD) of neurons. The chain is Transcriptional coactivator YAP1 (Yap1) from Rattus norvegicus (Rat).